The primary structure comprises 239 residues: 1-(5-phosphoribosyl)-5-[(5-phosphoribosylamino)methylideneamino] imidazole-4-carboxamide isomerase (239 aa).

Asp8 functions as the Proton acceptor in the catalytic mechanism. Residue Asp129 is the Proton donor of the active site.

This sequence belongs to the HisA/HisF family.

It localises to the cytoplasm. The catalysed reaction is 1-(5-phospho-beta-D-ribosyl)-5-[(5-phospho-beta-D-ribosylamino)methylideneamino]imidazole-4-carboxamide = 5-[(5-phospho-1-deoxy-D-ribulos-1-ylimino)methylamino]-1-(5-phospho-beta-D-ribosyl)imidazole-4-carboxamide. Its pathway is amino-acid biosynthesis; L-histidine biosynthesis; L-histidine from 5-phospho-alpha-D-ribose 1-diphosphate: step 4/9. The chain is 1-(5-phosphoribosyl)-5-[(5-phosphoribosylamino)methylideneamino] imidazole-4-carboxamide isomerase from Legionella pneumophila (strain Corby).